Consider the following 218-residue polypeptide: Elongation factor Ts (218 aa).

The segment at 82–85 is involved in Mg(2+) ion dislocation from EF-Tu; that stretch reads TDFV.

The protein belongs to the EF-Ts family.

The protein localises to the cytoplasm. In terms of biological role, associates with the EF-Tu.GDP complex and induces the exchange of GDP to GTP. It remains bound to the aminoacyl-tRNA.EF-Tu.GTP complex up to the GTP hydrolysis stage on the ribosome. The chain is Elongation factor Ts from Prochlorococcus marinus (strain MIT 9211).